The following is a 177-amino-acid chain: Disulfide bond formation protein B (177 aa).

Topologically, residues 1 to 14 are cytoplasmic; sequence MLALLKQFSEKRFV. Residues 15 to 31 traverse the membrane as a helical segment; sequence WFLLAFSSLALESTALY. Topologically, residues 32-49 are periplasmic; it reads FQYGMGLQPCVLCVYERL. A disulfide bond links cysteine 41 and cysteine 44. Residues 50–65 traverse the membrane as a helical segment; that stretch reads AMIGLFVAGTIALLQP. The Cytoplasmic portion of the chain corresponds to 66–72; sequence RVFILRL. Residues 73 to 90 traverse the membrane as a helical segment; the sequence is IALALGLFSSIKGLLISF. At 91 to 145 the chain is on the periplasmic side; sequence RHLDLQMNPAPWKQCEFIPNFPETLPFHQWFPFIFNPTGSCNESQWSLFGLTMVQ. The cysteines at positions 105 and 131 are disulfide-linked. A helical transmembrane segment spans residues 146–164; that stretch reads WLVVIFSLYVVILTLLLIA. Over 165-177 the chain is Cytoplasmic; it reads QVIKTRKQRRLFN.

This sequence belongs to the DsbB family.

The protein resides in the cell inner membrane. Required for disulfide bond formation in some periplasmic proteins. Acts by oxidizing the DsbA protein. This chain is Disulfide bond formation protein B, found in Haemophilus influenzae (strain ATCC 51907 / DSM 11121 / KW20 / Rd).